The sequence spans 353 residues: uncharacterized protein (353 aa).

A signal peptide spans 1–30 (MHLRHLFSPRLRGSLLLGSLLVASSFSTLA).

This is an uncharacterized protein from Salmonella typhimurium (strain LT2 / SGSC1412 / ATCC 700720).